Here is a 155-residue protein sequence, read N- to C-terminus: NADH-ubiquinone oxidoreductase chain 6 (155 aa).

4 consecutive transmembrane segments (helical) span residues 10–30 (ILAIGLLSPVQSIVCLIVLFV), 43–63 (LMGILYVLIYVGAIAILFLFI), 75–95 (GTIHPLIFTILIICLIPLDLS), and 133–153 (AIPMILIGLILILSVIGAIAI).

The protein belongs to the complex I subunit 6 family.

Its subcellular location is the mitochondrion membrane. The enzyme catalyses a ubiquinone + NADH + 5 H(+)(in) = a ubiquinol + NAD(+) + 4 H(+)(out). In terms of biological role, core subunit of the mitochondrial membrane respiratory chain NADH dehydrogenase (Complex I) that is believed to belong to the minimal assembly required for catalysis. Complex I functions in the transfer of electrons from NADH to the respiratory chain. The immediate electron acceptor for the enzyme is believed to be ubiquinone. This chain is NADH-ubiquinone oxidoreductase chain 6 (ND6), found in Candida parapsilosis (Yeast).